Reading from the N-terminus, the 367-residue chain is Succinyl-diaminopimelate desuccinylase (367 aa).

H64 is a binding site for Zn(2+). Residue D66 is part of the active site. Residue D95 participates in Zn(2+) binding. E125 serves as the catalytic Proton acceptor. Residues E126, E154, and H339 each contribute to the Zn(2+) site.

This sequence belongs to the peptidase M20A family. DapE subfamily. Homodimer. The cofactor is Zn(2+). Co(2+) serves as cofactor.

It catalyses the reaction N-succinyl-(2S,6S)-2,6-diaminopimelate + H2O = (2S,6S)-2,6-diaminopimelate + succinate. It functions in the pathway amino-acid biosynthesis; L-lysine biosynthesis via DAP pathway; LL-2,6-diaminopimelate from (S)-tetrahydrodipicolinate (succinylase route): step 3/3. Catalyzes the hydrolysis of N-succinyl-L,L-diaminopimelic acid (SDAP), forming succinate and LL-2,6-diaminopimelate (DAP), an intermediate involved in the bacterial biosynthesis of lysine and meso-diaminopimelic acid, an essential component of bacterial cell walls. This chain is Succinyl-diaminopimelate desuccinylase, found in Sulfurovum sp. (strain NBC37-1).